The chain runs to 409 residues: 5-aminolevulinate synthase (409 aa).

Residues Arg21, Ser137, and Lys156 each contribute to the substrate site. Ser189, His217, and Thr245 together coordinate pyridoxal 5'-phosphate. Lys248 is a catalytic residue. Lys248 is subject to N6-(pyridoxal phosphate)lysine. Residues Thr277 and Thr278 each coordinate pyridoxal 5'-phosphate. Thr365 contacts substrate.

This sequence belongs to the class-II pyridoxal-phosphate-dependent aminotransferase family. In terms of assembly, homodimer. Pyridoxal 5'-phosphate is required as a cofactor.

The enzyme catalyses succinyl-CoA + glycine + H(+) = 5-aminolevulinate + CO2 + CoA. It functions in the pathway porphyrin-containing compound metabolism; protoporphyrin-IX biosynthesis; 5-aminolevulinate from glycine: step 1/1. The chain is 5-aminolevulinate synthase (hemA) from Paracoccus denitrificans (strain Pd 1222).